The following is a 155-amino-acid chain: Small ribosomal subunit protein uS7 (155 aa).

This sequence belongs to the universal ribosomal protein uS7 family. Part of the 30S ribosomal subunit. Contacts proteins S9 and S11.

Its function is as follows. One of the primary rRNA binding proteins, it binds directly to 16S rRNA where it nucleates assembly of the head domain of the 30S subunit. Is located at the subunit interface close to the decoding center, probably blocks exit of the E-site tRNA. This chain is Small ribosomal subunit protein uS7, found in Helicobacter pylori (strain Shi470).